Here is a 495-residue protein sequence, read N- to C-terminus: Potassium voltage-gated channel subfamily A member 1 (495 aa).

A disordered region spans residues 1–30 (MTVMSGENVDEASAAPGHPQDGSYPRQADH). Residues 1 to 128 (MTVMSGENVD…FYELGEEAME (128 aa)) are tetramerization domain. Residues 1 to 164 (MTVMSGENVD…LLFEYPESSG (164 aa)) are Cytoplasmic-facing. The residue at position 23 (serine 23) is a Phosphoserine. Residues 165–186 (PARVIAIVSVMVILISIVIFCL) traverse the membrane as a helical segment. Residues 187–220 (ETLPELKDDKDFTGTVHRIDNTTVIYNSNIFTDP) lie on the Extracellular side of the membrane. The N-linked (GlcNAc...) asparagine glycan is linked to asparagine 207. The chain crosses the membrane as a helical span at residues 221–242 (FFIVETLCIIWFSFELVVRFFA). Cysteine 243 is lipidated: S-palmitoyl cysteine. The Cytoplasmic segment spans residues 243-253 (CPSKTDFFKNI). The helical transmembrane segment at 254–274 (MNFIDIVAIIPYFITLGTEIA) threads the bilayer. Over 275–287 (EQEGNQKGEQATS) the chain is Extracellular. The chain crosses the membrane as a helical; Voltage-sensor span at residues 288–308 (LAILRVIRLVRVFRIFKLSRH). The Cytoplasmic segment spans residues 309 to 323 (SKGLQILGQTLKASM). An S4-S5 linker region spans residues 310 to 323 (KGLQILGQTLKASM). Serine 322 is modified (phosphoserine; by PKA). The helical transmembrane segment at 324–345 (RELGLLIFFLFIGVILFSSAVY) threads the bilayer. Residues 346-359 (FAEAEEAESHFSSI) are Extracellular-facing. The helical intramembrane region spans 360 to 371 (PDAFWWAVVSMT). Positions 372–377 (TVGYGD) match the Selectivity filter motif. An intramembrane segment occupies 372 to 379 (TVGYGDMY). Over 380–386 (PVTIGGK) the chain is Extracellular. The chain crosses the membrane as a helical span at residues 387-415 (IVGSLCAIAGVLTIALPVPVIVSNFNYFY). Over 416-495 (HRETEGEEQA…VNKSKLLTDV (80 aa)) the chain is Cytoplasmic. Serine 437 and serine 439 each carry phosphoserine. Serine 446 bears the Phosphoserine; by PKA mark. The PDZ-binding signature appears at 493–495 (TDV).

Belongs to the potassium channel family. A (Shaker) (TC 1.A.1.2) subfamily. Kv1.1/KCNA1 sub-subfamily. Homotetramer and heterotetramer with other channel-forming alpha subunits, such as KCNA2, KCNA4, KCNA5, KCNA6 and KCNA7. Channel activity is regulated by interaction with the beta subunits KCNAB1 and KCNAB2. Identified in a complex with KCNA2 and KCNAB2. Interacts (via C-terminus) with the PDZ domains of DLG1, DLG2 and DLG4. Interacts with LGI1 within a complex containing LGI1, KCNA4 and KCNAB1. Interacts (via N-terminus) with STX1A; this promotes channel inactivation. Interacts (via N-terminus) with the heterodimer formed by GNB1 and GNG2; this promotes channel inactivation. Can interact simultaneously with STX1A and the heterodimer formed by GNB1 and GNG2. Interacts (via cytoplasmic N-terminal domain) with KCNRG; this inhibits channel activity. Interacts with ANK3; this inhibits channel activity. Interacts with ADAM11. N-glycosylated. Post-translationally, palmitoylated on Cys-243; which may be required for membrane targeting. In terms of processing, phosphorylated on tyrosine residues. Phosphorylation increases in response to NRG1; this inhibits channel activity. Phosphorylation at Ser-446 regulates channel activity by down-regulating expression at the cell membrane. In terms of tissue distribution, detected adjacent to nodes of Ranvier in juxtaparanodal zones in spinal cord nerve fibers, but also in paranodal regions in some myelinated spinal cord axons (at protein level). Detected in the islet of Langerhans.

It is found in the cell membrane. Its subcellular location is the membrane. The protein resides in the cell projection. The protein localises to the axon. It localises to the cytoplasmic vesicle. It is found in the perikaryon. Its subcellular location is the endoplasmic reticulum. The protein resides in the dendrite. The protein localises to the cell junction. It localises to the synapse. It is found in the presynaptic cell membrane. Its subcellular location is the presynapse. It catalyses the reaction K(+)(in) = K(+)(out). Its activity is regulated as follows. Inhibited by 1.1 mM 4-aminopyridine (4-AP) and by 20 mM tetraethylammonium (TEA), but not by charybdotoxin (CTX). Inhibited by dendrotoxin (DTX). Its function is as follows. Voltage-gated potassium channel that mediates transmembrane potassium transport in excitable membranes, primarily in the brain and the central nervous system, but also in the kidney. Contributes to the regulation of the membrane potential and nerve signaling, and prevents neuronal hyperexcitability. Forms tetrameric potassium-selective channels through which potassium ions pass in accordance with their electrochemical gradient. The channel alternates between opened and closed conformations in response to the voltage difference across the membrane. Can form functional homotetrameric channels and heterotetrameric channels that contain variable proportions of KCNA1, KCNA2, KCNA4, KCNA5, KCNA6, KCNA7, and possibly other family members as well; channel properties depend on the type of alpha subunits that are part of the channel. Channel properties are modulated by cytoplasmic beta subunits that regulate the subcellular location of the alpha subunits and promote rapid inactivation of delayed rectifier potassium channels. In vivo, membranes probably contain a mixture of heteromeric potassium channel complexes, making it difficult to assign currents observed in intact tissues to any particular potassium channel family member. Homotetrameric KCNA1 forms a delayed-rectifier potassium channel that opens in response to membrane depolarization, followed by slow spontaneous channel closure. In contrast, a heterotetrameric channel formed by KCNA1 and KCNA4 shows rapid inactivation. Regulates neuronal excitability in hippocampus, especially in mossy fibers and medial perforant path axons, preventing neuronal hyperexcitability. Response to toxins that are selective for KCNA1, respectively for KCNA2, suggests that heteromeric potassium channels composed of both KCNA1 and KCNA2 play a role in pacemaking and regulate the output of deep cerebellar nuclear neurons. May function as down-stream effector for G protein-coupled receptors and inhibit GABAergic inputs to basolateral amygdala neurons. May contribute to the regulation of neurotransmitter release, such as gamma-aminobutyric acid (GABA) release. Plays a role in regulating the generation of action potentials and preventing hyperexcitability in myelinated axons of the vagus nerve, and thereby contributes to the regulation of heart contraction. Required for normal neuromuscular responses. Regulates the frequency of neuronal action potential firing in response to mechanical stimuli, and plays a role in the perception of pain caused by mechanical stimuli, but does not play a role in the perception of pain due to heat stimuli. Required for normal responses to auditory stimuli and precise location of sound sources, but not for sound perception. The use of toxins that block specific channels suggest that it contributes to the regulation of the axonal release of the neurotransmitter dopamine. Required for normal postnatal brain development and normal proliferation of neuronal precursor cells in the brain. Plays a role in the reabsorption of Mg(2+) in the distal convoluted tubules in the kidney and in magnesium ion homeostasis, probably via its effect on the membrane potential. This Homo sapiens (Human) protein is Potassium voltage-gated channel subfamily A member 1.